An 886-amino-acid chain; its full sequence is KH domain-containing protein hrpk-2 (886 aa).

A compositionally biased stretch (basic and acidic residues) spans 359 to 368 (DNHFYNDKDS). The segment at 359–433 (DNHFYNDKDS…SHRKESACVD (75 aa)) is disordered. 2 stretches are compositionally biased toward basic residues: residues 369–388 (GKHH…KKHY) and 415–425 (HERKKRQRSSH). KH domains lie at 698 to 761 (KETV…IEKI) and 775 to 839 (PGIF…AYLT).

The chain is KH domain-containing protein hrpk-2 from Caenorhabditis elegans.